The primary structure comprises 198 residues: FMN-dependent NADH:quinone oxidoreductase (198 aa).

Residues serine 10 and 16-18 (SIS) contribute to the FMN site.

The protein belongs to the azoreductase type 1 family. As to quaternary structure, homodimer. FMN is required as a cofactor.

The catalysed reaction is 2 a quinone + NADH + H(+) = 2 a 1,4-benzosemiquinone + NAD(+). The enzyme catalyses N,N-dimethyl-1,4-phenylenediamine + anthranilate + 2 NAD(+) = 2-(4-dimethylaminophenyl)diazenylbenzoate + 2 NADH + 2 H(+). Quinone reductase that provides resistance to thiol-specific stress caused by electrophilic quinones. Its function is as follows. Also exhibits azoreductase activity. Catalyzes the reductive cleavage of the azo bond in aromatic azo compounds to the corresponding amines. This Mycoplasmopsis pulmonis (strain UAB CTIP) (Mycoplasma pulmonis) protein is FMN-dependent NADH:quinone oxidoreductase.